Consider the following 680-residue polypeptide: GTPase Obg (680 aa).

Residues 2-160 enclose the Obg domain; sequence DQFIDVVSFE…LNIRLEVKLI (159 aa). The OBG-type G domain occupies 161 to 336; sequence ADIGLVGMPN…LDGDMLDKVT (176 aa). GTP is bound by residues 167 to 174, 192 to 196, 214 to 217, 281 to 284, and 317 to 319; these read GMPNTGKS, FTTLT, DIPG, NKTD, and PEI. Mg(2+) contacts are provided by Ser-174 and Thr-194. The segment at 371-680 is radical SAM domain; that stretch reads TKRVFGPVVS…NGVLSYAVNI (310 aa). In terms of domain architecture, Radical SAM core spans 383–613; it reads LGNSLGIDVI…IEIDVPSVSD (231 aa). Cys-397, Cys-401, and Cys-404 together coordinate [4Fe-4S] cluster.

It belongs to the TRAFAC class OBG-HflX-like GTPase superfamily. OBG GTPase family. Monomer. It depends on Mg(2+) as a cofactor. Requires [4Fe-4S] cluster as cofactor.

The protein resides in the cytoplasm. An essential GTPase which binds GTP, GDP and possibly (p)ppGpp with moderate affinity, with high nucleotide exchange rates and a fairly low GTP hydrolysis rate. Plays a role in control of the cell cycle, stress response, ribosome biogenesis and in those bacteria that undergo differentiation, in morphogenesis control. The polypeptide is GTPase Obg (Brachyspira hyodysenteriae (strain ATCC 49526 / WA1)).